A 465-amino-acid polypeptide reads, in one-letter code: Chromosomal replication initiator protein DnaA (465 aa).

Residues 1-72 (MRTKQLWQVA…ETLSLLLGRP (72 aa)) are domain I, interacts with DnaA modulators. Residues 72 to 117 (PIAVHFTVHGQDDEEHPVQRRPQRRALASEEGSASKQLSLTPSPEH) are domain II. The disordered stretch occupies residues 80-118 (HGQDDEEHPVQRRPQRRALASEEGSASKQLSLTPSPEHG). A compositionally biased stretch (polar residues) spans 103–113 (GSASKQLSLTP). A domain III, AAA+ region region spans residues 118–334 (GLNPRYTFEK…GALNRIVALA (217 aa)). ATP contacts are provided by G162, G164, K165, and T166. Positions 335–465 (QLTHQPITLA…DAKAPLASRH (131 aa)) are domain IV, binds dsDNA.

This sequence belongs to the DnaA family. Oligomerizes as a right-handed, spiral filament on DNA at oriC.

The protein resides in the cytoplasm. In terms of biological role, plays an essential role in the initiation and regulation of chromosomal replication. ATP-DnaA binds to the origin of replication (oriC) to initiate formation of the DNA replication initiation complex once per cell cycle. Binds the DnaA box (a 9 base pair repeat at the origin) and separates the double-stranded (ds)DNA. Forms a right-handed helical filament on oriC DNA; dsDNA binds to the exterior of the filament while single-stranded (ss)DNA is stabiized in the filament's interior. The ATP-DnaA-oriC complex binds and stabilizes one strand of the AT-rich DNA unwinding element (DUE), permitting loading of DNA polymerase. After initiation quickly degrades to an ADP-DnaA complex that is not apt for DNA replication. Binds acidic phospholipids. The chain is Chromosomal replication initiator protein DnaA from Thermomicrobium roseum (strain ATCC 27502 / DSM 5159 / P-2).